Reading from the N-terminus, the 434-residue chain is 3-phosphoshikimate 1-carboxyvinyltransferase (434 aa).

3-phosphoshikimate contacts are provided by Lys-22, Ser-23, and Arg-27. Position 22 (Lys-22) interacts with phosphoenolpyruvate. Residues Gly-93 and Arg-121 each coordinate phosphoenolpyruvate. 3-phosphoshikimate-binding residues include Ser-168, Ser-169, Gln-170, Ser-199, Asp-320, and Lys-347. Residue Gln-170 participates in phosphoenolpyruvate binding. Residue Asp-320 is the Proton acceptor of the active site. 3 residues coordinate phosphoenolpyruvate: Arg-351, Arg-394, and Lys-419.

Belongs to the EPSP synthase family. Monomer.

It localises to the cytoplasm. It catalyses the reaction 3-phosphoshikimate + phosphoenolpyruvate = 5-O-(1-carboxyvinyl)-3-phosphoshikimate + phosphate. It functions in the pathway metabolic intermediate biosynthesis; chorismate biosynthesis; chorismate from D-erythrose 4-phosphate and phosphoenolpyruvate: step 6/7. Functionally, catalyzes the transfer of the enolpyruvyl moiety of phosphoenolpyruvate (PEP) to the 5-hydroxyl of shikimate-3-phosphate (S3P) to produce enolpyruvyl shikimate-3-phosphate and inorganic phosphate. The polypeptide is 3-phosphoshikimate 1-carboxyvinyltransferase (Burkholderia orbicola (strain MC0-3)).